The chain runs to 856 residues: MSGRDNRGAGGGGGGHQPLSNAMGKLKEKLTRVGDELGYHRVESNLSTSNTATSLDTILPEDPFLFPQVSPQRHPQTVRTQRLLEDEPPLSFRPLLEDDDINEPPTQQQKRTPLRASGSLELTPLPPPPTSLEIREHRDRQQRGAQGDELQRSKQSLKGSRVSFERRDTGNSNTNSNKAAESSDEDSFEEKRTGFQQQKATSVDHKGILKDLKHILANDNRRQFQAKKHVSLDVKGTRFLQDLLKESSSEEEFHKTRREFQGRKHQSLDPRVTFKLDKVLQGSSTDSDEEGEDAEHKRLIHRPKDITKPVIIDLKDLESESDEDFLTSRQHFQQQRSISTDSRKSRRLYEMDEMGNKRGENIRHAVPFVRQITEDGKPKLEVYRPTTNPIFIWTQVIAALSVSLGSLVVGFVSAYTSPALVSMSDPNITSFTVTKDAGSWVGGIMPLAGLVGGVAGGPLIEYMGRRNTILATAVPFIVSSLLIACAVNVAMVLCGRFLAGFCVGIASLSLPVYLGETVQPEVRGTLGLLPTAFGNIGILVCFVAGSFMNWSMLAFLGAALPVPFLILMFLIPETPRWYVSRGREERARKALTWLRGKEADVEPELKGLMRSQADADRQATQNTMLELLKRNNLKPLSISLGLMFFQQFSGINAVIFYTVQIFKDAGSTIDGNVCTIIVGVVNFVATFIGILLIDRAGRKILLYASDIAMVLTLFVLGGFFYCKAHGPDVSHLGWLPLTCFVVYILGFSVGFGPIPWLMMGEILPAKIRGAAASVATSFNWTCTFVVTKTFQDLVGSLGAHGAFWLFGAICFVGLFFVILYVPETQGKTLEDIERKMMGRVRRMSSVANIKPLSFNM.

Disordered regions lie at residues 1 to 29 (MSGR…LKEK) and 62 to 202 (DPFL…KATS). Topologically, residues 1-389 (MSGRDNRGAG…LEVYRPTTNP (389 aa)) are cytoplasmic. Residues 69-80 (VSPQRHPQTVRT) show a composition bias toward polar residues. Basic and acidic residues predominate over residues 133-142 (EIREHRDRQQ). The segment covering 170-180 (GNSNTNSNKAA) has biased composition (polar residues). Phosphoserine occurs at positions 247, 248, 249, 319, and 321. The interval 326 to 345 (LTSRQHFQQQRSISTDSRKS) is disordered. A compositionally biased stretch (polar residues) spans 329 to 340 (RQHFQQQRSIST). The chain crosses the membrane as a helical span at residues 390–410 (IFIWTQVIAALSVSLGSLVVG). The Extracellular segment spans residues 411–439 (FVSAYTSPALVSMSDPNITSFTVTKDAGS). N-linked (GlcNAc...) asparagine glycosylation is present at Asn-427. A helical membrane pass occupies residues 440–460 (WVGGIMPLAGLVGGVAGGPLI). Residues 461-472 (EYMGRRNTILAT) lie on the Cytoplasmic side of the membrane. Residues 473–493 (AVPFIVSSLLIACAVNVAMVL) form a helical membrane-spanning segment. Residues 494–496 (CGR) are Extracellular-facing. The helical transmembrane segment at 497–517 (FLAGFCVGIASLSLPVYLGET) threads the bilayer. Residues 518-527 (VQPEVRGTLG) lie on the Cytoplasmic side of the membrane. The chain crosses the membrane as a helical span at residues 528-548 (LLPTAFGNIGILVCFVAGSFM). Asn-549 carries an N-linked (GlcNAc...) asparagine glycan. Residues 549-551 (NWS) are Extracellular-facing. A helical membrane pass occupies residues 552–572 (MLAFLGAALPVPFLILMFLIP). Topologically, residues 573–635 (ETPRWYVSRG…ELLKRNNLKP (63 aa)) are cytoplasmic. Residues 636–656 (LSISLGLMFFQQFSGINAVIF) form a helical membrane-spanning segment. The Extracellular segment spans residues 657–672 (YTVQIFKDAGSTIDGN). A helical transmembrane segment spans residues 673 to 693 (VCTIIVGVVNFVATFIGILLI). The Cytoplasmic portion of the chain corresponds to 694–699 (DRAGRK). The chain crosses the membrane as a helical span at residues 700-720 (ILLYASDIAMVLTLFVLGGFF). Residues 721–739 (YCKAHGPDVSHLGWLPLTC) are Extracellular-facing. A helical membrane pass occupies residues 740–760 (FVVYILGFSVGFGPIPWLMMG). Residues 761 to 766 (EILPAK) are Cytoplasmic-facing. A helical transmembrane segment spans residues 767-787 (IRGAAASVATSFNWTCTFVVT). At 788 to 800 (KTFQDLVGSLGAH) the chain is on the extracellular side. Residues 801–821 (GAFWLFGAICFVGLFFVILYV) traverse the membrane as a helical segment. The Cytoplasmic portion of the chain corresponds to 822–856 (PETQGKTLEDIERKMMGRVRRMSSVANIKPLSFNM). Ser-844 and Ser-845 each carry phosphoserine.

The protein belongs to the major facilitator superfamily. Sugar transporter (TC 2.A.1.1) family. Trehalose transporter subfamily.

It is found in the cell membrane. In terms of biological role, low-capacity facilitative transporter for trehalose. Does not transport maltose, sucrose or lactose. Mediates the bidirectional transfer of trehalose. Responsible for the transport of trehalose synthesized in the fat body and the incorporation of trehalose into other tissues that require a carbon source, thereby regulating trehalose levels in the hemolymph. This chain is Facilitated trehalose transporter Tret1, found in Drosophila yakuba (Fruit fly).